We begin with the raw amino-acid sequence, 140 residues long: Large ribosomal subunit protein uL11 (140 aa).

The protein belongs to the universal ribosomal protein uL11 family. Part of the ribosomal stalk of the 50S ribosomal subunit. Interacts with L10 and the large rRNA to form the base of the stalk. L10 forms an elongated spine to which L12 dimers bind in a sequential fashion forming a multimeric L10(L12)X complex. One or more lysine residues are methylated.

In terms of biological role, forms part of the ribosomal stalk which helps the ribosome interact with GTP-bound translation factors. This chain is Large ribosomal subunit protein uL11, found in Nitratidesulfovibrio vulgaris (strain ATCC 29579 / DSM 644 / CCUG 34227 / NCIMB 8303 / VKM B-1760 / Hildenborough) (Desulfovibrio vulgaris).